Here is a 212-residue protein sequence, read N- to C-terminus: Proteasome subunit beta 2 (212 aa).

Residues 1–13 (MSVDEKVARALKG) constitute a propeptide, removed in mature form; by autocatalysis. Thr14 serves as the catalytic Nucleophile.

Belongs to the peptidase T1B family. In terms of assembly, the 20S proteasome core is composed of 14 alpha and 14 beta subunits that assemble into four stacked heptameric rings, resulting in a barrel-shaped structure. The two inner rings, each composed of seven catalytic beta subunits, are sandwiched by two outer rings, each composed of seven alpha subunits. The catalytic chamber with the active sites is on the inside of the barrel. Has a gated structure, the ends of the cylinder being occluded by the N-termini of the alpha-subunits. Is capped at one or both ends by the proteasome regulatory ATPase, PAN.

It is found in the cytoplasm. The catalysed reaction is Cleavage of peptide bonds with very broad specificity.. With respect to regulation, the formation of the proteasomal ATPase PAN-20S proteasome complex, via the docking of the C-termini of PAN into the intersubunit pockets in the alpha-rings, triggers opening of the gate for substrate entry. Interconversion between the open-gate and close-gate conformations leads to a dynamic regulation of the 20S proteasome proteolysis activity. Component of the proteasome core, a large protease complex with broad specificity involved in protein degradation. In Ignicoccus hospitalis (strain KIN4/I / DSM 18386 / JCM 14125), this protein is Proteasome subunit beta 2.